The sequence spans 1277 residues: Myosin-1 (1277 aa).

A compositionally biased stretch (basic residues) spans 1–13; sequence MAPSKKAGKKVTP. The tract at residues 1–27 is disordered; that stretch reads MAPSKKAGKKVTPKKAAGNNAKSKVAK. A Myosin motor domain is found at 39 to 718; that stretch reads VGVTDMTLLT…TLFALETMRD (680 aa). 132–139 is an ATP binding site; that stretch reads GESGAGKT. S360 carries the phosphoserine modification. The interval 407 to 489 is actin-binding; that stretch reads IIGILDIFGF…PGIFAALNDA (83 aa). Residues 567 to 587 are disordered; it reads LFPDRPDPNSKKRPPTASDRI. IQ domains follow at residues 722-742 and 743-768; these read HNMA…KHEC and ARRI…YGHQ. Residues 776 to 965 enclose the TH1 domain; the sequence is RRRFSLLSYR…TVHVPSGEPA (190 aa). 2 disordered regions span residues 952-1072 and 1129-1259; these read YKSH…AEPE and PKAA…GPGQ. Positions 1015–1056 are enriched in low complexity; sequence PAVATPSVVSTPAAAAVVSKPKPAASTPAAVRAPAVTPAARS. The segment covering 1057-1068 has biased composition (pro residues); it reads VPPPPPPPPPAR. In terms of domain architecture, SH3 spans 1071–1129; the sequence is PEKEMYRAKFDFQGQEGEMSLTKDDEVELIEKDENGWWLVKKDGVEAWAPYNYLERIAP. Pro residues predominate over residues 1132–1142; that stretch reads APAPPPPPARP. 2 stretches are compositionally biased toward polar residues: residues 1145–1159 and 1185–1197; these read TSTV…TTAD and AATT…SSRP. Residues 1204–1224 are compositionally biased toward pro residues; the sequence is VPPPVAAKPKPPVVAPKPGVP. Residues 1226-1240 show a composition bias toward low complexity; the sequence is PGGKPALPTTARPAP. The span at 1241 to 1258 shows a compositional bias: gly residues; it reads SGGGAAAGRLGGGGGGPG.

It belongs to the TRAFAC class myosin-kinesin ATPase superfamily. Myosin family. Post-translationally, phosphorylation of the TEDS site (Ser-360) is required for the polarization of the actin cytoskeleton. Phosphorylation probably activates the myosin-I ATPase activity.

Its subcellular location is the cytoplasm. The protein resides in the cytoskeleton. It localises to the actin patch. In terms of biological role, type-I myosin implicated in the organization of the actin cytoskeleton. Required for proper actin cytoskeleton polarization. At the cell cortex, assembles in patch-like structures together with proteins from the actin-polymerizing machinery and promotes actin assembly. Functions as actin nucleation-promoting factor (NPF) for the Arp2/3 complex. This chain is Myosin-1 (MYO1), found in Coprinopsis cinerea (strain Okayama-7 / 130 / ATCC MYA-4618 / FGSC 9003) (Inky cap fungus).